The sequence spans 140 residues: Tail assembly protein G (140 aa).

The disordered stretch occupies residues 114 to 140 (IDEPTSSGEERNEPAEPVTAEKPSPVS).

It belongs to the lambda-like tail assembly protein family. As to quaternary structure, interacts with the tail assembly protein GT and the tape measure protein.

It localises to the host cytoplasm. In terms of biological role, promotes tail assembly by creating a scaffold for the tail tube proteins. Tail assembly proteins G and GT probably wrap the linear tape measure protein to create a tail assembly scaffold. This allows the polymerization of the tail tube protein, during which G and GT are released, therefore they are absent in the mature virion. The tail assembly protein GT is produced by a rare -1 ribosomal frameshift. The ratio of translated G/GT is about 20, and this ratio is important for proper tail assembly. The polypeptide is Tail assembly protein G (Escherichia coli (Bacteriophage N15)).